We begin with the raw amino-acid sequence, 187 residues long: UPF0301 protein SO_3346 (187 aa).

It belongs to the UPF0301 (AlgH) family.

The chain is UPF0301 protein SO_3346 from Shewanella oneidensis (strain ATCC 700550 / JCM 31522 / CIP 106686 / LMG 19005 / NCIMB 14063 / MR-1).